We begin with the raw amino-acid sequence, 451 residues long: Zinc finger MYND domain-containing protein 10 homolog (451 aa).

Positions 412, 415, 423, 426, 432, 436, 444, and 448 each coordinate Zn(2+). An MYND-type zinc finger spans residues 412 to 448; that stretch reads CATCQAKAKKKCACCKKVHYCSRDCQLKDWPQHKLVC.

Belongs to the ZMYND10 family. As to expression, specifically expressed in cells with flagella and motile cilia: chordotonal sensory neurons and sperm.

It is found in the cytoplasm. The protein localises to the cell projection. It localises to the cilium. The protein resides in the dynein axonemal particle. Its function is as follows. Plays a role in axonemal structure organization and motility. May be involved in axonemal pre-assembly of inner and outer dynein arms (IDA and ODA, respectively) for proper axoneme building for cilia motility. The protein is Zinc finger MYND domain-containing protein 10 homolog of Drosophila melanogaster (Fruit fly).